A 258-amino-acid chain; its full sequence is uncharacterized protein (258 aa).

Asparagine 60, asparagine 104, and asparagine 113 each carry an N-linked (GlcNAc...) asparagine; by host glycan. Low complexity predominate over residues 147 to 156 (TTRKPGQKTT). Positions 147-183 (TTRKPGQKTTLSRLKTTPNKHTQHKRSTRRTSPRDYN) are disordered. Residues 157-166 (LSRLKTTPNK) are compositionally biased toward polar residues. The span at 167–177 (HTQHKRSTRRT) shows a compositional bias: basic residues. Residue asparagine 183 is glycosylated (N-linked (GlcNAc...) asparagine; by host). Residues 208–228 (AHSAWILIVIIIIIVVILFFF) form a helical membrane-spanning segment.

Belongs to the RL11 family.

The protein resides in the membrane. This is an uncharacterized protein from Human cytomegalovirus (strain AD169) (HHV-5).